The sequence spans 634 residues: 1-deoxy-D-xylulose-5-phosphate synthase (634 aa).

Thiamine diphosphate contacts are provided by residues histidine 74 and 115-117; that span reads AHS. Aspartate 146 serves as a coordination point for Mg(2+). Residues 147 to 148, asparagine 176, tyrosine 283, and glutamate 365 each bind thiamine diphosphate; that span reads GA. Asparagine 176 lines the Mg(2+) pocket.

It belongs to the transketolase family. DXPS subfamily. Homodimer. The cofactor is Mg(2+). It depends on thiamine diphosphate as a cofactor.

It catalyses the reaction D-glyceraldehyde 3-phosphate + pyruvate + H(+) = 1-deoxy-D-xylulose 5-phosphate + CO2. It functions in the pathway metabolic intermediate biosynthesis; 1-deoxy-D-xylulose 5-phosphate biosynthesis; 1-deoxy-D-xylulose 5-phosphate from D-glyceraldehyde 3-phosphate and pyruvate: step 1/1. Catalyzes the acyloin condensation reaction between C atoms 2 and 3 of pyruvate and glyceraldehyde 3-phosphate to yield 1-deoxy-D-xylulose-5-phosphate (DXP). This chain is 1-deoxy-D-xylulose-5-phosphate synthase, found in Burkholderia pseudomallei (strain 668).